Consider the following 122-residue polypeptide: Large ribosomal subunit protein uL14 (122 aa).

It belongs to the universal ribosomal protein uL14 family. Part of the 50S ribosomal subunit. Forms a cluster with proteins L3 and L19. In the 70S ribosome, L14 and L19 interact and together make contacts with the 16S rRNA in bridges B5 and B8.

Binds to 23S rRNA. Forms part of two intersubunit bridges in the 70S ribosome. This Bifidobacterium longum (strain DJO10A) protein is Large ribosomal subunit protein uL14.